The following is an 81-amino-acid chain: Putative chemokine-related protein B42 (81 aa).

3 disulfide bridges follow: cysteine 7–cysteine 73, cysteine 8–cysteine 29, and cysteine 11–cysteine 45.

Expressed in placenta, heart, lung, liver, pancreas, skeletal muscle and brain.

It localises to the cytoplasm. The chain is Putative chemokine-related protein B42 from Homo sapiens (Human).